The chain runs to 110 residues: Phosphoribosyl-ATP pyrophosphatase (110 aa).

This sequence belongs to the PRA-PH family.

The protein resides in the cytoplasm. It carries out the reaction 1-(5-phospho-beta-D-ribosyl)-ATP + H2O = 1-(5-phospho-beta-D-ribosyl)-5'-AMP + diphosphate + H(+). It participates in amino-acid biosynthesis; L-histidine biosynthesis; L-histidine from 5-phospho-alpha-D-ribose 1-diphosphate: step 2/9. The chain is Phosphoribosyl-ATP pyrophosphatase from Hahella chejuensis (strain KCTC 2396).